Consider the following 133-residue polypeptide: uncharacterized protein (133 aa).

Positions Lys-82–Gln-133 are disordered. Positions Tyr-86–Lys-100 are enriched in polar residues. A compositionally biased stretch (low complexity) spans Gln-105–Gln-133.

This is an uncharacterized protein from Acidianus convivator (ABV).